The primary structure comprises 582 residues: Putative BTB/POZ domain-containing protein At3g08660 (582 aa).

The tract at residues 1 to 21 (MGSDSTLSLPSSSPPCNNRSS) is disordered. Positions 36-103 (GDIIVVVDGE…CYGINFDITA (68 aa)) constitute a BTB domain. The NPH3 domain maps to 196-466 (EMWTEELSAL…VRVLYTEQLR (271 aa)). A Phosphotyrosine modification is found at Y407. Positions 558 to 582 (GGETRQKVNRKSRSVSERKSSRSGR) are disordered. Positions 571–582 (SVSERKSSRSGR) are enriched in basic and acidic residues.

It belongs to the NPH3 family.

It participates in protein modification; protein ubiquitination. May act as a substrate-specific adapter of an E3 ubiquitin-protein ligase complex (CUL3-RBX1-BTB) which mediates the ubiquitination and subsequent proteasomal degradation of target proteins. The chain is Putative BTB/POZ domain-containing protein At3g08660 from Arabidopsis thaliana (Mouse-ear cress).